The sequence spans 256 residues: Isoprenyl transferase (256 aa).

The active site involves Asp33. Asp33 serves as a coordination point for Mg(2+). Residues 34 to 37 (GNGR), Trp38, Arg46, His50, and 78 to 80 (STE) contribute to the substrate site. The Proton acceptor role is filled by Asn81. Residues Trp82, Arg84, Arg201, and 207–209 (RIS) contribute to the substrate site. Glu220 lines the Mg(2+) pocket.

Belongs to the UPP synthase family. In terms of assembly, homodimer. Requires Mg(2+) as cofactor.

In terms of biological role, catalyzes the condensation of isopentenyl diphosphate (IPP) with allylic pyrophosphates generating different type of terpenoids. The polypeptide is Isoprenyl transferase (Staphylococcus haemolyticus (strain JCSC1435)).